Reading from the N-terminus, the 325-residue chain is Beta-lactamase 1 (325 aa).

The signal sequence occupies residues Met-1–Gly-26. The interval Gly-30 to Ala-50 is disordered. Ser-93 serves as the catalytic Acyl-ester intermediate. Residue Lys-270–Gly-272 coordinates substrate.

This sequence belongs to the class-A beta-lactamase family.

The catalysed reaction is a beta-lactam + H2O = a substituted beta-amino acid. The protein is Beta-lactamase 1 (blaL) of Streptomyces cacaoi.